The following is a 351-amino-acid chain: Ion-translocating oxidoreductase complex subunit D (351 aa).

Transmembrane regions (helical) follow at residues 18–38 (IMLL…YFFG), 40–60 (GSLI…GAVL), 87–107 (LPPL…IVIA), and 121–141 (PAMV…TSWL). An FMN phosphoryl threonine modification is found at threonine 185. 5 helical membrane-spanning segments follow: residues 211 to 231 (VLAG…GLLL), 241 to 261 (IPVS…MIAP), 264 to 284 (FASP…FFIA), 298 to 318 (LIFG…GGYP), and 320 to 340 (GVAF…HYTQ).

This sequence belongs to the NqrB/RnfD family. As to quaternary structure, the complex is composed of six subunits: RnfA, RnfB, RnfC, RnfD, RnfE and RnfG. It depends on FMN as a cofactor.

Its subcellular location is the cell inner membrane. Part of a membrane-bound complex that couples electron transfer with translocation of ions across the membrane. In Yersinia pseudotuberculosis serotype O:1b (strain IP 31758), this protein is Ion-translocating oxidoreductase complex subunit D.